Reading from the N-terminus, the 465-residue chain is 23S rRNA (uracil(1939)-C(5))-methyltransferase RlmD (465 aa).

A disordered region spans residues 1–20 (MSEAVPLSTPGASHAGAATD). The region spanning 12 to 80 (ASHAGAATDR…PTYEQAQVVD (69 aa)) is the TRAM domain. The [4Fe-4S] cluster site is built by cysteine 93, cysteine 99, cysteine 102, and cysteine 181. The S-adenosyl-L-methionine site is built by glutamine 289, phenylalanine 318, asparagine 323, glutamate 339, asparagine 367, and aspartate 388. Cysteine 421 functions as the Nucleophile in the catalytic mechanism.

This sequence belongs to the class I-like SAM-binding methyltransferase superfamily. RNA M5U methyltransferase family. RlmD subfamily.

The catalysed reaction is uridine(1939) in 23S rRNA + S-adenosyl-L-methionine = 5-methyluridine(1939) in 23S rRNA + S-adenosyl-L-homocysteine + H(+). Its function is as follows. Catalyzes the formation of 5-methyl-uridine at position 1939 (m5U1939) in 23S rRNA. This chain is 23S rRNA (uracil(1939)-C(5))-methyltransferase RlmD, found in Burkholderia thailandensis (strain ATCC 700388 / DSM 13276 / CCUG 48851 / CIP 106301 / E264).